We begin with the raw amino-acid sequence, 126 residues long: S-adenosylmethionine decarboxylase proenzyme (126 aa).

The active-site Schiff-base intermediate with substrate; via pyruvic acid is the S63. The residue at position 63 (S63) is a Pyruvic acid (Ser); by autocatalysis. The active-site Proton acceptor; for processing activity is the H68. The active-site Proton donor; for catalytic activity is the C83.

The protein belongs to the prokaryotic AdoMetDC family. Type 1 subfamily. In terms of assembly, heterotetramer of two alpha and two beta chains arranged as a dimer of alpha/beta heterodimers. Pyruvate serves as cofactor. In terms of processing, is synthesized initially as an inactive proenzyme. Formation of the active enzyme involves a self-maturation process in which the active site pyruvoyl group is generated from an internal serine residue via an autocatalytic post-translational modification. Two non-identical subunits are generated from the proenzyme in this reaction, and the pyruvate is formed at the N-terminus of the alpha chain, which is derived from the carboxyl end of the proenzyme. The post-translation cleavage follows an unusual pathway, termed non-hydrolytic serinolysis, in which the side chain hydroxyl group of the serine supplies its oxygen atom to form the C-terminus of the beta chain, while the remainder of the serine residue undergoes an oxidative deamination to produce ammonia and the pyruvoyl group blocking the N-terminus of the alpha chain.

It catalyses the reaction S-adenosyl-L-methionine + H(+) = S-adenosyl 3-(methylsulfanyl)propylamine + CO2. Its pathway is amine and polyamine biosynthesis; S-adenosylmethioninamine biosynthesis; S-adenosylmethioninamine from S-adenosyl-L-methionine: step 1/1. Its function is as follows. Catalyzes the decarboxylation of S-adenosylmethionine to S-adenosylmethioninamine (dcAdoMet), the propylamine donor required for the synthesis of the polyamines spermine and spermidine from the diamine putrescine. The polypeptide is S-adenosylmethionine decarboxylase proenzyme (Oceanobacillus iheyensis (strain DSM 14371 / CIP 107618 / JCM 11309 / KCTC 3954 / HTE831)).